We begin with the raw amino-acid sequence, 298 residues long: MYHIISIRDFERSDLDYLLDRAQEFDTGKYRPGMLDDKLVALLFFEPSTRTRMSFATAMARLGGRSISVDSVEASSIVKGETLADTIRVVSGYADAIVLRHPKEGAARLASEFATVPVINAGDGAGQHPSQTLLDLYTIRQSMPVDGIDVGLLGDLRYGRTAHSLALALSLYGVTLHTIAPVGLEMPANIALELRERGMEVVEHPNVEEAIRELDVLYVTRIQRERFPDSASYYNVASSYRITTDLLDGVKERLMILHPLPRAGEIDPAVDRTPYARYFEQARNGVPIRMALLHEVMK.

Residues Arg-50 and Thr-51 each coordinate carbamoyl phosphate. An L-aspartate-binding site is contributed by Lys-79. Carbamoyl phosphate contacts are provided by Arg-100, His-128, and Gln-131. L-aspartate-binding residues include Arg-160 and Arg-221. 2 residues coordinate carbamoyl phosphate: Leu-260 and Pro-261.

It belongs to the aspartate/ornithine carbamoyltransferase superfamily. ATCase family. In terms of assembly, heterooligomer of catalytic and regulatory chains.

It catalyses the reaction carbamoyl phosphate + L-aspartate = N-carbamoyl-L-aspartate + phosphate + H(+). The protein operates within pyrimidine metabolism; UMP biosynthesis via de novo pathway; (S)-dihydroorotate from bicarbonate: step 2/3. Its function is as follows. Catalyzes the condensation of carbamoyl phosphate and aspartate to form carbamoyl aspartate and inorganic phosphate, the committed step in the de novo pyrimidine nucleotide biosynthesis pathway. The sequence is that of Aspartate carbamoyltransferase catalytic subunit from Methanoculleus marisnigri (strain ATCC 35101 / DSM 1498 / JR1).